Consider the following 163-residue polypeptide: uncharacterized protein (163 aa).

The next 2 helical transmembrane spans lie at 7-27 (YLNE…CYIV) and 51-71 (LVIF…LVWF).

It localises to the cell membrane. This is an uncharacterized protein from Rickettsia prowazekii (strain Madrid E).